The sequence spans 263 residues: Probable septum site-determining protein MinC (263 aa).

A disordered region spans residues 107–159; that stretch reads LPPSGARERPLDIKDSAPRKPAEEPSPSAGEARPEPAKAEEKPAEPVSRPTKV. Composition is skewed to basic and acidic residues over residues 112 to 129 and 138 to 150; these read ARER…KPAE and ARPE…EKPA.

Belongs to the MinC family. Interacts with MinD and FtsZ.

Its function is as follows. Cell division inhibitor that blocks the formation of polar Z ring septums. Rapidly oscillates between the poles of the cell to destabilize FtsZ filaments that have formed before they mature into polar Z rings. Prevents FtsZ polymerization. The chain is Probable septum site-determining protein MinC from Pseudomonas aeruginosa (strain LESB58).